A 495-amino-acid chain; its full sequence is Cytochrome P450 monooxygenase 64 (495 aa).

Residues 2 to 22 (FLQIVTSVLATGLLYALISVL) traverse the membrane as a helical segment. N-linked (GlcNAc...) asparagine glycosylation is found at Asn25 and Asn198. Residue Cys428 participates in heme binding.

Belongs to the cytochrome P450 family. The cofactor is heme.

The protein resides in the membrane. The protein operates within secondary metabolite biosynthesis. Functionally, cytochrome P450 monooxygenase that is able to use 4-ethoxybenzoic acid as a substrate for oxidation. The sequence is that of Cytochrome P450 monooxygenase 64 from Postia placenta (strain ATCC 44394 / Madison 698-R) (Brown rot fungus).